Consider the following 128-residue polypeptide: Transcription antitermination protein NusB (128 aa).

The protein belongs to the NusB family.

Involved in transcription antitermination. Required for transcription of ribosomal RNA (rRNA) genes. Binds specifically to the boxA antiterminator sequence of the ribosomal RNA (rrn) operons. The polypeptide is Transcription antitermination protein NusB (Listeria monocytogenes serotype 4b (strain CLIP80459)).